The sequence spans 236 residues: ATP synthase subunit a, chloroplastic (236 aa).

The next 5 membrane-spanning stretches (helical) occupy residues 25 to 45 (MHGQ…AFAV), 87 to 107 (FIGT…LIPW), 123 to 143 (DINT…YAGL), 180 to 202 (LFGN…PLVI), and 210 to 230 (GLFT…AYIG).

Belongs to the ATPase A chain family. As to quaternary structure, F-type ATPases have 2 components, CF(1) - the catalytic core - and CF(0) - the membrane proton channel. CF(1) has five subunits: alpha(3), beta(3), gamma(1), delta(1), epsilon(1). CF(0) has four main subunits: a, b, b' and c.

Its subcellular location is the plastid. It is found in the chloroplast thylakoid membrane. Key component of the proton channel; it plays a direct role in the translocation of protons across the membrane. The protein is ATP synthase subunit a, chloroplastic of Ostreococcus tauri.